The following is a 359-amino-acid chain: MADQDPGGISPLQQMVASGAGAVVTSLFMTPLDVVKVRLQSQRPSVASELMPPSRLWSLSYAKLPSSLRSTGKCLLYCNGVLEPLYLCPNGARCATWFQDPTRFTGTMDAFVKIVRHEGTRTLWSGLPATLVMTVPATAAYFTAYDQLKAFLCGRALTSDLYAPMVAGALARLGTVTVISPLELVRTKLQAQHLSYRELGTCVRAAVAQGGWRSLWLGWGPTALRDVPFSALYWFNYELVKSWLSGLRPKDQTSVGISFVAGGISGMVAATLTLPFDVVKTQRQVALGAVEALRVMPLNTDSTWLLLRRILAESGTRGLFAGFLPRIIKAAPSCAIMISTYEFGKNFFQRLNREQLLSP.

Over 1–14 (MADQDPGGISPLQQ) the chain is Mitochondrial intermembrane. Solcar repeat units follow at residues 9–151 (ISPL…LKAF), 159–243 (SDLY…VKSW), and 253–347 (TSVG…GKNF). The helical transmembrane segment at 15 to 35 (MVASGAGAVVTSLFMTPLDVV) threads the bilayer. Over 36-121 (KVRLQSQRPS…VKIVRHEGTR (86 aa)) the chain is Mitochondrial matrix. Positions 74, 78, 88, and 94 each coordinate [2Fe-2S] cluster. The helical transmembrane segment at 122–142 (TLWSGLPATLVMTVPATAAYF) threads the bilayer. Over 143 to 164 (TAYDQLKAFLCGRALTSDLYAP) the chain is Mitochondrial intermembrane. Residues 165–185 (MVAGALARLGTVTVISPLELV) form a helical membrane-spanning segment. Topologically, residues 186-214 (RTKLQAQHLSYRELGTCVRAAVAQGGWRS) are mitochondrial matrix. Residues 215–235 (LWLGWGPTALRDVPFSALYWF) form a helical membrane-spanning segment. The Mitochondrial intermembrane portion of the chain corresponds to 236-255 (NYELVKSWLSGLRPKDQTSV). The helical transmembrane segment at 256–276 (GISFVAGGISGMVAATLTLPF) threads the bilayer. The Mitochondrial matrix portion of the chain corresponds to 277–317 (DVVKTQRQVALGAVEALRVMPLNTDSTWLLLRRILAESGTR). A helical transmembrane segment spans residues 318–338 (GLFAGFLPRIIKAAPSCAIMI). The Mitochondrial intermembrane portion of the chain corresponds to 339–359 (STYEFGKNFFQRLNREQLLSP).

The protein belongs to the mitochondrial carrier (TC 2.A.29) family. In terms of processing, cleaved and degraded by AFG3L2; degradation by AFG3L2 is regulated by the ability of SLC25A39 to bind iron-sulfur. In absence of mitochondrial glutathione, SLC25A39 binds iron-sulfur, preventing cleavage and degradation by AFG3L2. The presence of mitochondrial glutathione prevents iron-sulfur-binding to SLC25A39, promoting cleavage and degradation by AFG3L2.

The protein localises to the mitochondrion inner membrane. The catalysed reaction is glutathione(in) = glutathione(out). The activity of SLC25A39 is regulated by levels of mitochondrial glutathione via its ability to bind [2Fe-2S] iron-sulfur cluster. Upon physiological levels of mitochondrial glutathione, glutathione prevents iron-sulfur-binding to SLC25A39 promoting cleavage and degradation by AFG3L2. Upon depletion of mitochondrial glutathione, SLC25A39 binds iron-sulfur, preventing cleavage and degradation by AFG3L2. Mitochondrial transporter required for glutathione import into mitochondria. Glutathione, which plays key roles in oxidative metabolism, is produced exclusively in the cytosol and is imported in many organelles. Mitochondrial glutathione is required for the activity and stability of proteins containing iron-sulfur clusters, as well as erythropoiesis. The chain is Mitochondrial glutathione transporter SLC25A39 (SLC25A39) from Bos taurus (Bovine).